Reading from the N-terminus, the 284-residue chain is RNA polymerase sigma factor RpoH (284 aa).

The tract at residues 53-122 (LILSHLRFVI…IHEYVLRNWR (70 aa)) is sigma-70 factor domain-2. Positions 77–80 (DLIQ) match the Interaction with polymerase core subunit RpoC motif. Positions 228-280 (ALLRLDERSRHIIHARWLDKNKKNTLQNIANNYGISAERVRQLEKNAMKKLKL) are sigma-70 factor domain-4. Residues 253 to 272 (LQNIANNYGISAERVRQLEK) constitute a DNA-binding region (H-T-H motif).

The protein belongs to the sigma-70 factor family. RpoH subfamily. As to quaternary structure, interacts with the RNA polymerase core enzyme.

The protein localises to the cytoplasm. Its function is as follows. Sigma factors are initiation factors that promote the attachment of RNA polymerase to specific initiation sites and are then released. This sigma factor is involved in regulation of expression of heat shock genes. This chain is RNA polymerase sigma factor RpoH, found in Buchnera aphidicola subsp. Acyrthosiphon pisum (strain APS) (Acyrthosiphon pisum symbiotic bacterium).